The following is a 166-amino-acid chain: Large ribosomal subunit protein mL49 (166 aa).

Residues 56–78 are disordered; that stretch reads RIPDPPKHEHYPTPSGWQPPRDP.

Belongs to the mitochondrion-specific ribosomal protein mL49 family. As to quaternary structure, component of the mitochondrial large ribosomal subunit (mt-LSU). Mature mammalian 55S mitochondrial ribosomes consist of a small (28S) and a large (39S) subunit. The 28S small subunit contains a 12S ribosomal RNA (12S mt-rRNA) and 30 different proteins. The 39S large subunit contains a 16S rRNA (16S mt-rRNA), a copy of mitochondrial valine transfer RNA (mt-tRNA(Val)), which plays an integral structural role, and 52 different proteins. Interacts with OXA1L. Ubiquitous.

It is found in the mitochondrion. The protein is Large ribosomal subunit protein mL49 (MRPL49) of Homo sapiens (Human).